Here is a 98-residue protein sequence, read N- to C-terminus: Small ribosomal subunit protein bS20 (98 aa).

Over residues 1 to 12 (MAPRKPSKKVGP) the composition is skewed to basic residues. Residues 1–31 (MAPRKPSKKVGPQKRPSAEKRVITSKKKQLR) are disordered.

It belongs to the bacterial ribosomal protein bS20 family.

Binds directly to 16S ribosomal RNA. The protein is Small ribosomal subunit protein bS20 of Chlamydia trachomatis serovar L2 (strain ATCC VR-902B / DSM 19102 / 434/Bu).